A 907-amino-acid polypeptide reads, in one-letter code: Alanine--tRNA ligase (907 aa).

Residues His-602, His-606, Cys-706, and His-710 each contribute to the Zn(2+) site.

The protein belongs to the class-II aminoacyl-tRNA synthetase family. The cofactor is Zn(2+).

Its subcellular location is the cytoplasm. It catalyses the reaction tRNA(Ala) + L-alanine + ATP = L-alanyl-tRNA(Ala) + AMP + diphosphate. In terms of biological role, catalyzes the attachment of alanine to tRNA(Ala) in a two-step reaction: alanine is first activated by ATP to form Ala-AMP and then transferred to the acceptor end of tRNA(Ala). Also edits incorrectly charged Ser-tRNA(Ala) and Gly-tRNA(Ala) via its editing domain. This chain is Alanine--tRNA ligase, found in Thermofilum pendens (strain DSM 2475 / Hrk 5).